The sequence spans 422 residues: Glutamate-1-semialdehyde 2,1-aminomutase (422 aa).

Lysine 264 carries the post-translational modification N6-(pyridoxal phosphate)lysine.

The protein belongs to the class-III pyridoxal-phosphate-dependent aminotransferase family. HemL subfamily. In terms of assembly, homodimer. Requires pyridoxal 5'-phosphate as cofactor.

It is found in the cytoplasm. The catalysed reaction is (S)-4-amino-5-oxopentanoate = 5-aminolevulinate. Its pathway is porphyrin-containing compound metabolism; protoporphyrin-IX biosynthesis; 5-aminolevulinate from L-glutamyl-tRNA(Glu): step 2/2. This is Glutamate-1-semialdehyde 2,1-aminomutase from Clostridium tetani (strain Massachusetts / E88).